A 398-amino-acid polypeptide reads, in one-letter code: Thyrotropin-releasing hormone receptor (398 aa).

Residues 1–28 (MENETGSELNQTQLQPRAVVALEYQVVT) are Extracellular-facing. Residues N3 and N10 are each glycosylated (N-linked (GlcNAc...) asparagine). The chain crosses the membrane as a helical span at residues 29 to 51 (ILLVLIICGLGIVGNIMVVLVVM). The Cytoplasmic portion of the chain corresponds to 52-61 (RTKHMRTPTN). Residues 62–83 (CYLVSLAVADLMVLVAAGLPNI) form a helical membrane-spanning segment. Residues 84–99 (TDSIYGSWVYGYVGCL) are Extracellular-facing. An intrachain disulfide couples C98 to C179. A helical transmembrane segment spans residues 100-121 (CITYLQYLGINASSCSITAFTI). Over 122–144 (ERYIAICHPIKAQFLCTFSRAKK) the chain is Cytoplasmic. The helical transmembrane segment at 145 to 168 (IIIFVWAFTSIYCMLWFFLLDLNI) threads the bilayer. The Extracellular segment spans residues 169–193 (STYKDAIVVSCGYKISRNYYSPIYL). A helical transmembrane segment spans residues 194–215 (MDFGVFYVVPMILATVLYGFIA). Topologically, residues 216-266 (RILFLSPIPSDPKENSNTWKNDSTHQNKNLNSKTSNRYFNSTVSSRKQVTK) are cytoplasmic. The chain crosses the membrane as a helical span at residues 267–288 (MLAVVVILFALLWMPYRTLVVV). Residues 289-296 (NSFLSSPF) lie on the Extracellular side of the membrane. A helical membrane pass occupies residues 297 to 319 (QENWFLLFCRICIYLNSAINPVI). Over 320 to 398 (YNLMSQKFRA…LASEVTFSQS (79 aa)) the chain is Cytoplasmic.

The protein belongs to the G-protein coupled receptor 1 family.

It is found in the cell membrane. Functionally, receptor for thyrotropin-releasing hormone (TRH). Upon ligand binding, this G-protein-coupled receptor triggers activation of the phosphatidylinositol (IP3)-calcium-protein kinase C (PKC) pathway. This chain is Thyrotropin-releasing hormone receptor (TRHR), found in Ovis aries (Sheep).